The sequence spans 328 residues: Eukaryotic translation initiation factor 3 subunit I (328 aa).

WD repeat units follow at residues 8-49 (GHER…GTYR), 50-89 (GHNGAVWCCDVSRDSSRLITGSADQTAKLWDVKSGKELFT), 146-185 (DGKKRINRAVWGPLNQTIVSGGEDKVIRIWDAETGKLLKQ), 191-230 (GHKKDITSLCKAADDSHFLTGSLDKTAKLWDMRTLTLLKT), and 288-327 (GHFGPINALAFNPDGKSFSSGGEDGYVRLHHFDSDYFNIK).

Belongs to the eIF-3 subunit I family. Component of the eukaryotic translation initiation factor 3 (eIF-3) complex.

Its subcellular location is the cytoplasm. In terms of biological role, component of the eukaryotic translation initiation factor 3 (eIF-3) complex, which is involved in protein synthesis of a specialized repertoire of mRNAs and, together with other initiation factors, stimulates binding of mRNA and methionyl-tRNAi to the 40S ribosome. The eIF-3 complex specifically targets and initiates translation of a subset of mRNAs involved in cell proliferation. The chain is Eukaryotic translation initiation factor 3 subunit I (TIF3I1) from Arabidopsis thaliana (Mouse-ear cress).